The sequence spans 345 residues: sn-glycerol-3-phosphate import ATP-binding protein UgpC (345 aa).

Positions 4–235 (IQLLNIKKQY…PKTIFVADFI (232 aa)) constitute an ABC transporter domain. 37 to 44 (GPSGCGKS) contributes to the ATP binding site.

The protein belongs to the ABC transporter superfamily. sn-glycerol-3-phosphate importer (TC 3.A.1.1.3) family. In terms of assembly, the complex is composed of two ATP-binding proteins (UgpC), two transmembrane proteins (UgpA and UgpE) and a solute-binding protein (UgpB).

Its subcellular location is the cell inner membrane. The enzyme catalyses sn-glycerol 3-phosphate(out) + ATP + H2O = sn-glycerol 3-phosphate(in) + ADP + phosphate + H(+). Part of the ABC transporter complex UgpBAEC involved in sn-glycerol-3-phosphate (G3P) import. Responsible for energy coupling to the transport system. This chain is sn-glycerol-3-phosphate import ATP-binding protein UgpC, found in Bartonella bacilliformis (strain ATCC 35685 / KC583 / Herrer 020/F12,63).